Reading from the N-terminus, the 301-residue chain is Eukaryotic translation initiation factor 3 subunit F (301 aa).

Residues 32–169 (VHVHPVALFS…IKSYISSPLG (138 aa)) form the MPN domain.

This sequence belongs to the eIF-3 subunit F family. In terms of assembly, component of the eukaryotic translation initiation factor 3 (eIF-3) complex.

Its subcellular location is the cytoplasm. In terms of biological role, component of the eukaryotic translation initiation factor 3 (eIF-3) complex, which is involved in protein synthesis of a specialized repertoire of mRNAs and, together with other initiation factors, stimulates binding of mRNA and methionyl-tRNAi to the 40S ribosome. The eIF-3 complex specifically targets and initiates translation of a subset of mRNAs involved in cell proliferation. The chain is Eukaryotic translation initiation factor 3 subunit F from Mycosarcoma maydis (Corn smut fungus).